We begin with the raw amino-acid sequence, 132 residues long: Peptide methionine sulfoxide reductase MsrB (132 aa).

A MsrB domain is found at 8–130 (LDSWREELTE…NSASLKLVPR (123 aa)). Residues C47, C50, C96, and C99 each contribute to the Zn(2+) site. The Nucleophile role is filled by C119.

The protein belongs to the MsrB Met sulfoxide reductase family. Zn(2+) serves as cofactor.

The enzyme catalyses L-methionyl-[protein] + [thioredoxin]-disulfide + H2O = L-methionyl-(R)-S-oxide-[protein] + [thioredoxin]-dithiol. In Pseudomonas paraeruginosa (strain DSM 24068 / PA7) (Pseudomonas aeruginosa (strain PA7)), this protein is Peptide methionine sulfoxide reductase MsrB.